Reading from the N-terminus, the 298-residue chain is MLKIGSHVSMSGKKMLLAASEEAVSYGATTFMIYTGAPQNTRRKPIEELNIEAGRKHMELNGIEEIIVHAPYIINVGNTTKPETFQLGVDFLRMEIERTSALGVAKQIVLHPGAHVGAGADAGIQQIIKGLNEVLTPEQTVNIALETMAGKGTECGRSFEEIAKIIDGVKYNEKLSVCFDTCHTHDAGYDIVNDFDGVLNEFDKIVGIDRLQVLHINDSKNVRGAGKDRHENIGFGHIGYKALHHIVHHPQLMHVPKILETPYVGEDKKDKKPPYKLEIEMLKNGNFDEGILEKIKAQ.

Zn(2+) is bound by residues histidine 69, histidine 111, glutamate 146, aspartate 180, histidine 183, histidine 215, aspartate 228, histidine 230, and glutamate 260.

Belongs to the AP endonuclease 2 family. It depends on Zn(2+) as a cofactor.

The enzyme catalyses Endonucleolytic cleavage to 5'-phosphooligonucleotide end-products.. Endonuclease IV plays a role in DNA repair. It cleaves phosphodiester bonds at apurinic or apyrimidinic (AP) sites, generating a 3'-hydroxyl group and a 5'-terminal sugar phosphate. This chain is Probable endonuclease 4, found in Bacillus cereus (strain G9842).